A 126-amino-acid chain; its full sequence is Aspartate 1-decarboxylase (126 aa).

The active-site Schiff-base intermediate with substrate; via pyruvic acid is the Ser25. The residue at position 25 (Ser25) is a Pyruvic acid (Ser). A substrate-binding site is contributed by Thr57. The active-site Proton donor is Tyr58. Position 73-75 (73-75) interacts with substrate; the sequence is GAA.

It belongs to the PanD family. In terms of assembly, heterooctamer of four alpha and four beta subunits. It depends on pyruvate as a cofactor. Post-translationally, is synthesized initially as an inactive proenzyme, which is activated by self-cleavage at a specific serine bond to produce a beta-subunit with a hydroxyl group at its C-terminus and an alpha-subunit with a pyruvoyl group at its N-terminus.

The protein resides in the cytoplasm. The catalysed reaction is L-aspartate + H(+) = beta-alanine + CO2. It functions in the pathway cofactor biosynthesis; (R)-pantothenate biosynthesis; beta-alanine from L-aspartate: step 1/1. In terms of biological role, catalyzes the pyruvoyl-dependent decarboxylation of aspartate to produce beta-alanine. The chain is Aspartate 1-decarboxylase from Yersinia pestis bv. Antiqua (strain Antiqua).